A 757-amino-acid polypeptide reads, in one-letter code: RNA cytosine C(5)-methyltransferase NSUN2 (757 aa).

The tract at residues 1–35 (MGRRARGRRFQQPPQPEGEEDASDGGRKRGQAGWE) is disordered. Position 23 is a phosphoserine (Ser-23). Lys-46 participates in a covalent cross-link: Glycyl lysine isopeptide (Lys-Gly) (interchain with G-Cter in SUMO2). Ser-139 carries the post-translational modification Phosphoserine; by AURKB. Residues 184–190 (CAAPGSK), Asp-215, Asp-242, and Asp-268 each bind S-adenosyl-L-methionine. The active-site Nucleophile is Cys-321. The tract at residues 436 to 504 (NKRQPKVQNK…EKKDGVCGPP (69 aa)) is disordered. Residues Ser-456 and Ser-473 each carry the phosphoserine modification. The segment covering 463 to 476 (GNPSDQSELESQMI) has biased composition (polar residues). Residues Lys-510 and Lys-515 each participate in a glycyl lysine isopeptide (Lys-Gly) (interchain with G-Cter in SUMO2) cross-link. Lys-585 is modified (N6-acetyllysine; alternate). Lys-585 bears the N6-malonyllysine; alternate mark. Residue Lys-585 forms a Glycyl lysine isopeptide (Lys-Gly) (interchain with G-Cter in SUMO2); alternate linkage. Residue Ser-592 is modified to Phosphoserine. Residues Lys-639, Lys-653, and Lys-659 each participate in a glycyl lysine isopeptide (Lys-Gly) (interchain with G-Cter in SUMO2) cross-link. The interval 716-757 (LTNENAASPEQPGDEDAKQTAQDPCVPDSVPGCDAAAAEPSR) is disordered. A Phosphothreonine modification is found at Thr-717. Ser-723 is subject to Phosphoserine.

This sequence belongs to the class I-like SAM-binding methyltransferase superfamily. RsmB/NOP family. TRM4 subfamily. As to quaternary structure, interacts with NPM1 and NCL during interphase; interaction is disrupted following phosphorylation at Ser-139. Phosphorylated at Ser-139 by AURKB during mitosis, leading to abolish methyltransferase activity and the interaction with NPM1. As to expression, ubiquitously expressed at low level. Up-regulated in tumors. Dynamically expressed during morphogenesis and in adult skin: in adult skin, expression is up-regulated in the bulge and hair germ as soon as the hair follicle enters its growing phase (anagen). During anagen, expressed at highest level in cells of the hair germ that give rise to the hair matrix.

The protein resides in the nucleus. Its subcellular location is the nucleolus. It localises to the cytoplasm. It is found in the mitochondrion. The protein localises to the cytoskeleton. The protein resides in the spindle. Its subcellular location is the secreted. It localises to the extracellular exosome. The catalysed reaction is cytidine(48) in tRNA + S-adenosyl-L-methionine = 5-methylcytidine(48) in tRNA + S-adenosyl-L-homocysteine + H(+). The enzyme catalyses cytidine(49) in tRNA + S-adenosyl-L-methionine = 5-methylcytidine(49) in tRNA + S-adenosyl-L-homocysteine + H(+). It carries out the reaction cytidine(50) in tRNA + S-adenosyl-L-methionine = 5-methylcytidine(50) in tRNA + S-adenosyl-L-homocysteine + H(+). It catalyses the reaction cytidine(34) in tRNA precursor + S-adenosyl-L-methionine = 5-methylcytidine(34) in tRNA precursor + S-adenosyl-L-homocysteine + H(+). The catalysed reaction is a cytidine in mRNA + S-adenosyl-L-methionine = a 5-methylcytidine in mRNA + S-adenosyl-L-homocysteine + H(+). With respect to regulation, inhibited by magnesium ions. Its function is as follows. RNA cytosine C(5)-methyltransferase that methylates cytosine to 5-methylcytosine (m5C) in various RNAs, such as tRNAs, mRNAs and some long non-coding RNAs (lncRNAs). Involved in various processes, such as epidermal stem cell differentiation, testis differentiation and maternal to zygotic transition during early development: acts by increasing protein synthesis; cytosine C(5)-methylation promoting tRNA stability and preventing mRNA decay. Methylates cytosine to 5-methylcytosine (m5C) at positions 34 and 48 of intron-containing tRNA(Leu)(CAA) precursors, and at positions 48, 49 and 50 of tRNA(Gly)(GCC) precursors. tRNA methylation is required generation of RNA fragments derived from tRNAs (tRFs). Also mediates C(5)-methylation of mitochondrial tRNAs. Catalyzes cytosine C(5)-methylation of mRNAs, leading to stabilize them and prevent mRNA decay: mRNA stabilization involves YBX1 that specifically recognizes and binds m5C-modified transcripts. Cytosine C(5)-methylation of mRNAs also regulates mRNA export: methylated transcripts are specifically recognized by THOC4/ALYREF, which mediates mRNA nucleo-cytoplasmic shuttling. Also mediates cytosine C(5)-methylation of non-coding RNAs, such as vault RNAs (vtRNAs), promoting their processing into regulatory small RNAs. Cytosine C(5)-methylation of vtRNA VTRNA1.1 promotes its processing into small-vault RNA4 (svRNA4) and regulates epidermal differentiation. May act downstream of Myc to regulate epidermal cell growth and proliferation. Required for proper spindle assembly and chromosome segregation, independently of its methyltransferase activity. The polypeptide is RNA cytosine C(5)-methyltransferase NSUN2 (Mus musculus (Mouse)).